The sequence spans 380 residues: Ceramide-binding protein svf1 (380 aa).

A peripherally associates with membranes region spans residues 1-18 (MKAWLQSSISYYTGTAEP).

Belongs to the SVF1 family.

It is found in the golgi apparatus. The protein resides in the cis-Golgi network membrane. It localises to the endoplasmic reticulum membrane. Its subcellular location is the cytoplasm. The protein localises to the nucleus. Ceramide-binding protein that may transfer ceramides from the endoplasmic reticulum membrane to the cis-Golgi network membrane, and is thereby required for the biosynthesis of complex sphingolipids. The polypeptide is Ceramide-binding protein svf1 (Schizosaccharomyces pombe (strain 972 / ATCC 24843) (Fission yeast)).